The sequence spans 201 residues: Glutathione peroxidase 1 (201 aa).

A Phosphoserine modification is found at Ser32. Sec47 is an active-site residue. A non-standard amino acid (selenocysteine) is located at residue Sec47. N6-acetyllysine; alternate is present on residues Lys86, Lys112, and Lys146. Lys86, Lys112, and Lys146 each carry N6-succinyllysine; alternate. Phosphoserine occurs at positions 195 and 199.

Belongs to the glutathione peroxidase family. In terms of assembly, homotetramer. Interacts with MIEN1. During periods of oxidative stress, Sec-47 may react with a superoxide radical, irreversibly lose hydroselenide and be converted to dehydroalanine.

Its subcellular location is the cytoplasm. The protein localises to the mitochondrion. The enzyme catalyses 2 glutathione + H2O2 = glutathione disulfide + 2 H2O. It catalyses the reaction a hydroperoxy polyunsaturated fatty acid + 2 glutathione = a hydroxy polyunsaturated fatty acid + glutathione disulfide + H2O. It carries out the reaction tert-butyl hydroperoxide + 2 glutathione = tert-butanol + glutathione disulfide + H2O. The catalysed reaction is cumene hydroperoxide + 2 glutathione = 2-phenylpropan-2-ol + glutathione disulfide + H2O. The enzyme catalyses (13S)-hydroperoxy-(9Z,11E)-octadecadienoate + 2 glutathione = (13S)-hydroxy-(9Z,11E)-octadecadienoate + glutathione disulfide + H2O. It catalyses the reaction (9S)-hydroperoxy-(10E,12Z)-octadecadienoate + 2 glutathione = (9S)-hydroxy-(10E,12Z)-octadecadienoate + glutathione disulfide + H2O. It carries out the reaction (5S)-hydroperoxy-(6E,8Z,11Z,14Z)-eicosatetraenoate + 2 glutathione = (5S)-hydroxy-(6E,8Z,11Z,14Z)-eicosatetraenoate + glutathione disulfide + H2O. The catalysed reaction is (12S)-hydroperoxy-(5Z,8Z,10E,14Z)-eicosatetraenoate + 2 glutathione = (12S)-hydroxy-(5Z,8Z,10E,14Z)-eicosatetraenoate + glutathione disulfide + H2O. The enzyme catalyses (12R)-hydroperoxy-(5Z,8Z,10E,14Z)-eicosatetraenoate + 2 glutathione = (12R)-hydroxy-(5Z,8Z,10E,14Z)-eicosatetraenoate + glutathione disulfide + H2O. It catalyses the reaction (15S)-hydroperoxy-(5Z,8Z,11Z,13E)-eicosatetraenoate + 2 glutathione = (15S)-hydroxy-(5Z,8Z,11Z,13E)-eicosatetraenoate + glutathione disulfide + H2O. It carries out the reaction (5S)-hydroperoxy-(6E,8Z,11Z,14Z,17Z)-eicosapentaenoate + 2 glutathione = (5S)-hydroxy-(6E,8Z,11Z,14Z,17Z)-eicosapentaenoate + glutathione disulfide + H2O. The catalysed reaction is (12S)-hydroperoxy-(5Z,8Z,10E,14Z,17Z)-eicosapentaenoate + 2 glutathione = (12S)-hydroxy-(5Z,8Z,10E,14Z,17Z)-eicosapentaenoate + glutathione disulfide + H2O. The enzyme catalyses (15S)-hydroperoxy-(5Z,8Z,11Z,13E,17Z)-eicosapentaenoate + 2 glutathione = (15S)-hydroxy-(5Z,8Z,11Z,13E,17Z)-eicosapentaenoate + glutathione disulfide + H2O. It catalyses the reaction (15S)-hydroperoxy-(11Z,13E)-eicosadienoate + 2 glutathione = (15S)-hydroxy-(11Z,13E)-eicosadienoate + glutathione disulfide + H2O. It carries out the reaction (17S)-hydroperoxy-(4Z,7Z,10Z,13Z,15E,19Z)-docosahexaenoate + 2 glutathione = (17S)-hydroxy-(4Z,7Z,10Z,13Z,15E,19Z)-docosahexaenoate + glutathione disulfide + H2O. In terms of biological role, catalyzes the reduction of hydroperoxides in a glutathione-dependent manner thus regulating cellular redox homeostasis. Can reduce small soluble hydroperoxides such as H2O2, cumene hydroperoxide and tert-butyl hydroperoxide, as well as several fatty acid-derived hydroperoxides. In platelets catalyzes the reduction of 12-hydroperoxyeicosatetraenoic acid, the primary product of the arachidonate 12-lipoxygenase pathway. This chain is Glutathione peroxidase 1 (GPX1), found in Callithrix jacchus (White-tufted-ear marmoset).